The primary structure comprises 121 residues: Phosphoribosyl-ATP pyrophosphatase (121 aa).

The protein belongs to the PRA-PH family.

It is found in the cytoplasm. The catalysed reaction is 1-(5-phospho-beta-D-ribosyl)-ATP + H2O = 1-(5-phospho-beta-D-ribosyl)-5'-AMP + diphosphate + H(+). It participates in amino-acid biosynthesis; L-histidine biosynthesis; L-histidine from 5-phospho-alpha-D-ribose 1-diphosphate: step 2/9. The chain is Phosphoribosyl-ATP pyrophosphatase from Nitrosospira multiformis (strain ATCC 25196 / NCIMB 11849 / C 71).